A 196-amino-acid chain; its full sequence is Nucleoside triphosphate pyrophosphatase (196 aa).

The Proton acceptor role is filled by aspartate 70.

This sequence belongs to the Maf family. Requires a divalent metal cation as cofactor.

The protein localises to the cytoplasm. The enzyme catalyses a ribonucleoside 5'-triphosphate + H2O = a ribonucleoside 5'-phosphate + diphosphate + H(+). The catalysed reaction is a 2'-deoxyribonucleoside 5'-triphosphate + H2O = a 2'-deoxyribonucleoside 5'-phosphate + diphosphate + H(+). Nucleoside triphosphate pyrophosphatase. May have a dual role in cell division arrest and in preventing the incorporation of modified nucleotides into cellular nucleic acids. This Gloeothece citriformis (strain PCC 7424) (Cyanothece sp. (strain PCC 7424)) protein is Nucleoside triphosphate pyrophosphatase.